The following is a 344-amino-acid chain: Anthranilate phosphoribosyltransferase (344 aa).

5-phospho-alpha-D-ribose 1-diphosphate is bound by residues Gly80, Gly83–Asp84, Thr88, Asn90–Thr93, Lys108–Ser116, and Ser120. Gly80 is a binding site for anthranilate. Ser92 is a Mg(2+) binding site. Asn111 contacts anthranilate. Arg166 contributes to the anthranilate binding site. Mg(2+)-binding residues include Asp225 and Glu226.

Belongs to the anthranilate phosphoribosyltransferase family. In terms of assembly, homodimer. Mg(2+) serves as cofactor.

The catalysed reaction is N-(5-phospho-beta-D-ribosyl)anthranilate + diphosphate = 5-phospho-alpha-D-ribose 1-diphosphate + anthranilate. It functions in the pathway amino-acid biosynthesis; L-tryptophan biosynthesis; L-tryptophan from chorismate: step 2/5. In terms of biological role, catalyzes the transfer of the phosphoribosyl group of 5-phosphorylribose-1-pyrophosphate (PRPP) to anthranilate to yield N-(5'-phosphoribosyl)-anthranilate (PRA). The protein is Anthranilate phosphoribosyltransferase of Legionella pneumophila (strain Lens).